Consider the following 157-residue polypeptide: Galactose-specific lectin (157 aa).

The Jacalin-type lectin domain occupies 12 to 157 (SIVVGTWGAE…LDYIGFHLAL (146 aa)). Asn45 is a glycosylation site (N-linked (GlcNAc...) asparagine).

This sequence belongs to the jacalin lectin family. In terms of assembly, tetramer of heterodimers of light and heavy chains which are non-covalently linked. N-linked carbohydrates at Asn-45 can be of complex or paucimannose type.

In terms of biological role, alpha-D-galactose-specific lectin. Has hemagglutinating activity towards human and rabbit erythrocytes. Is highly cytotoxic to human cells in vitro. This Morus indica (Mulberry) protein is Galactose-specific lectin.